A 161-amino-acid chain; its full sequence is Nucleotide-binding protein Shal_3198 (161 aa).

Belongs to the YajQ family.

Its function is as follows. Nucleotide-binding protein. In Shewanella halifaxensis (strain HAW-EB4), this protein is Nucleotide-binding protein Shal_3198.